Reading from the N-terminus, the 588-residue chain is Proline--tRNA ligase (588 aa).

This sequence belongs to the class-II aminoacyl-tRNA synthetase family. ProS type 1 subfamily. In terms of assembly, homodimer.

The protein resides in the cytoplasm. It carries out the reaction tRNA(Pro) + L-proline + ATP = L-prolyl-tRNA(Pro) + AMP + diphosphate. Functionally, catalyzes the attachment of proline to tRNA(Pro) in a two-step reaction: proline is first activated by ATP to form Pro-AMP and then transferred to the acceptor end of tRNA(Pro). As ProRS can inadvertently accommodate and process non-cognate amino acids such as alanine and cysteine, to avoid such errors it has two additional distinct editing activities against alanine. One activity is designated as 'pretransfer' editing and involves the tRNA(Pro)-independent hydrolysis of activated Ala-AMP. The other activity is designated 'posttransfer' editing and involves deacylation of mischarged Ala-tRNA(Pro). The misacylated Cys-tRNA(Pro) is not edited by ProRS. The chain is Proline--tRNA ligase from Corynebacterium efficiens (strain DSM 44549 / YS-314 / AJ 12310 / JCM 11189 / NBRC 100395).